Here is a 336-residue protein sequence, read N- to C-terminus: Nuclear envelope-associated protein 3 (336 aa).

Coiled coils occupy residues Leu14 to Ser87 and Val128 to Lys261. The short motif at Lys240–Lys261 is the Bipartite nuclear localization signal element. The helical transmembrane segment at Leu313 to Leu330 threads the bilayer.

As to quaternary structure, forms homomers and heteromers with NEAP1 and NEAP2. Interacts with SUN1 and SUN2.

It is found in the nucleus inner membrane. Its subcellular location is the nucleus. It localises to the nucleoplasm. This is Nuclear envelope-associated protein 3 from Arabidopsis thaliana (Mouse-ear cress).